A 142-amino-acid chain; its full sequence is Hemoglobin subunit alpha (142 aa).

Residues 2–142 enclose the Globin domain; the sequence is VLSPADKTNI…VSTVLTSKYR (141 aa). A Phosphoserine modification is found at Ser4. Lys8 is modified (N6-succinyllysine). Position 9 is a phosphothreonine (Thr9). Lys12 bears the N6-succinyllysine mark. N6-acetyllysine; alternate is present on Lys17. Lys17 is subject to N6-succinyllysine; alternate. The residue at position 25 (Tyr25) is a Phosphotyrosine. At Ser36 the chain carries Phosphoserine. At Lys41 the chain carries N6-succinyllysine. Position 50 is a phosphoserine (Ser50). Residue His59 participates in O2 binding. Residue His88 participates in heme b binding. Phosphoserine is present on Ser103. At Thr109 the chain carries Phosphothreonine. Residue Ser125 is modified to Phosphoserine. 2 positions are modified to phosphothreonine: Thr135 and Thr138. Ser139 is subject to Phosphoserine.

It belongs to the globin family. In terms of assembly, heterotetramer of two alpha chains and two beta chains. In terms of tissue distribution, red blood cells.

Functionally, involved in oxygen transport from the lung to the various peripheral tissues. Its function is as follows. Hemopressin acts as an antagonist peptide of the cannabinoid receptor CNR1. Hemopressin-binding efficiently blocks cannabinoid receptor CNR1 and subsequent signaling. This is Hemoglobin subunit alpha (HBA) from Canis latrans (Coyote).